The primary structure comprises 243 residues: Mitochondrial import inner membrane translocase subunit TIM17-2 (243 aa).

4 helical membrane passes run 19-36, 66-83, 90-109, and 115-137; these read IGGAFGMGAVGGSAFHFI, FAVWGGLFSTFDCTMVYL, WNSIIAGAATGGFLSMRQGA, and SAIFGGVLLALIEGAGIMLNKVL. 10 tandem repeats follow at residues 149-151, 152-154, 155-157, 158-160, 161-163, 164-166, 167-169, 170-172, 173-175, and 176-178. The segment at 149–178 is 10 X approximate repeats GMQ/P; it reads GMQGMPGMQGMQGMPGMPGMQGMPGMQGMQ. Residues 166 to 183 show a composition bias toward low complexity; the sequence is PGMQGMPGMQGMQMGQMQ. Residues 166–243 are disordered; sequence PGMQGMPGMQ…APPVPSFEFK (78 aa). Over residues 184–198 the composition is skewed to polar residues; that stretch reads SQAQIRSESQNQNTA. Over residues 211–228 the composition is skewed to basic and acidic residues; sequence FDKKKEEVQPGSESKTEV.

It belongs to the Tim17/Tim22/Tim23 family. As to quaternary structure, component of the TIM17:23 complex at least composed of TIM23, TIM17 and TIM50. The complex interacts with the TIM44 component of the PAM complex. Interacts with TIM23-2. Expressed in roots, flowers, leaves and young cotyledons.

The protein resides in the mitochondrion inner membrane. It localises to the mitochondrion outer membrane. Its function is as follows. Essential component of the TIM17:23 complex, a complex that mediates the translocation of transit peptide-containing proteins across the mitochondrial inner membrane. Links the inner and outer membranes. In Arabidopsis thaliana (Mouse-ear cress), this protein is Mitochondrial import inner membrane translocase subunit TIM17-2 (TIM17-2).